Reading from the N-terminus, the 372-residue chain is N-methyl-L-tryptophan oxidase (372 aa).

FAD is bound at residue 4-34 (DLIIIGSGSVGAAAGYYATRAGLNVLMTDAH). C308 carries the S-8alpha-FAD cysteine modification.

The protein belongs to the MSOX/MTOX family. MTOX subfamily. As to quaternary structure, monomer. Requires FAD as cofactor.

It catalyses the reaction N(alpha)-methyl-L-tryptophan + O2 + H2O = L-tryptophan + formaldehyde + H2O2. Its function is as follows. Catalyzes the oxidative demethylation of N-methyl-L-tryptophan. This chain is N-methyl-L-tryptophan oxidase, found in Escherichia coli O17:K52:H18 (strain UMN026 / ExPEC).